Here is a 288-residue protein sequence, read N- to C-terminus: Phenazine biosynthesis-like domain-containing protein (288 aa).

E46 is an active-site residue.

The protein belongs to the PhzF family. Interacts with UNRIP/MAWD.

The protein is Phenazine biosynthesis-like domain-containing protein (PBLD) of Homo sapiens (Human).